The primary structure comprises 204 residues: Imidazoleglycerol-phosphate dehydratase (204 aa).

Belongs to the imidazoleglycerol-phosphate dehydratase family.

It is found in the cytoplasm. The enzyme catalyses D-erythro-1-(imidazol-4-yl)glycerol 3-phosphate = 3-(imidazol-4-yl)-2-oxopropyl phosphate + H2O. Its pathway is amino-acid biosynthesis; L-histidine biosynthesis; L-histidine from 5-phospho-alpha-D-ribose 1-diphosphate: step 6/9. This chain is Imidazoleglycerol-phosphate dehydratase, found in Rhodococcus opacus (strain B4).